Reading from the N-terminus, the 130-residue chain is Small ribosomal subunit protein uS8 (130 aa).

This sequence belongs to the universal ribosomal protein uS8 family. Part of the 30S ribosomal subunit. Contacts proteins S5 and S12.

One of the primary rRNA binding proteins, it binds directly to 16S rRNA central domain where it helps coordinate assembly of the platform of the 30S subunit. In Vibrio atlanticus (strain LGP32) (Vibrio splendidus (strain Mel32)), this protein is Small ribosomal subunit protein uS8.